Reading from the N-terminus, the 362-residue chain is 3-dehydroquinate synthase (362 aa).

NAD(+)-binding positions include 70 to 75 (DGESYK), 104 to 108 (GVVGD), 128 to 129 (TT), Lys-141, and Lys-150. The Zn(2+) site is built by Glu-183, His-246, and His-263.

Belongs to the sugar phosphate cyclases superfamily. Dehydroquinate synthase family. Co(2+) is required as a cofactor. It depends on Zn(2+) as a cofactor. Requires NAD(+) as cofactor.

Its subcellular location is the cytoplasm. It catalyses the reaction 7-phospho-2-dehydro-3-deoxy-D-arabino-heptonate = 3-dehydroquinate + phosphate. Its pathway is metabolic intermediate biosynthesis; chorismate biosynthesis; chorismate from D-erythrose 4-phosphate and phosphoenolpyruvate: step 2/7. Catalyzes the conversion of 3-deoxy-D-arabino-heptulosonate 7-phosphate (DAHP) to dehydroquinate (DHQ). The protein is 3-dehydroquinate synthase of Saccharophagus degradans (strain 2-40 / ATCC 43961 / DSM 17024).